Here is an 808-residue protein sequence, read N- to C-terminus: Sucrose synthase 1 (808 aa).

The tract at residues 277 to 754 is GT-B glycosyltransferase; the sequence is MVFNVVILSP…GLQRIEEKYT (478 aa).

The protein belongs to the glycosyltransferase 1 family. Plant sucrose synthase subfamily. Homotetramer. As to expression, expressed in the phloem of leaves and in roots. Detected in the whole plant but more precisely confined to the vasculature in cotyledons, mature leaves and siliques.

It catalyses the reaction an NDP-alpha-D-glucose + D-fructose = a ribonucleoside 5'-diphosphate + sucrose + H(+). Functionally, sucrose-cleaving enzyme that provides UDP-glucose and fructose for various metabolic pathways. This Arabidopsis thaliana (Mouse-ear cress) protein is Sucrose synthase 1 (SUS1).